A 284-amino-acid chain; its full sequence is Diaminopimelate epimerase (284 aa).

3 residues coordinate substrate: N20, Q53, and N73. The active-site Proton donor is the C82. Substrate-binding positions include 83–84 (GN), N167, N200, and 218–219 (ER). C227 (proton acceptor) is an active-site residue. 228–229 (GS) contributes to the substrate binding site.

It belongs to the diaminopimelate epimerase family. Homodimer.

Its subcellular location is the cytoplasm. The catalysed reaction is (2S,6S)-2,6-diaminopimelate = meso-2,6-diaminopimelate. The protein operates within amino-acid biosynthesis; L-lysine biosynthesis via DAP pathway; DL-2,6-diaminopimelate from LL-2,6-diaminopimelate: step 1/1. Its function is as follows. Catalyzes the stereoinversion of LL-2,6-diaminopimelate (L,L-DAP) to meso-diaminopimelate (meso-DAP), a precursor of L-lysine and an essential component of the bacterial peptidoglycan. This is Diaminopimelate epimerase from Xanthomonas oryzae pv. oryzae (strain MAFF 311018).